Consider the following 115-residue polypeptide: MSNIIKQLEQEQMKQDVPSFRPGDTVEVKVWVVEGSKKRLQAFEGVVIAIRNRGLHSAFTVRKISNGEGVERVFQTHSPVVDSIAVKRRGAVRKAKLYYLRERTGKAARIKERLN.

This sequence belongs to the bacterial ribosomal protein bL19 family.

This protein is located at the 30S-50S ribosomal subunit interface and may play a role in the structure and function of the aminoacyl-tRNA binding site. The sequence is that of Large ribosomal subunit protein bL19 from Citrobacter koseri (strain ATCC BAA-895 / CDC 4225-83 / SGSC4696).